The following is a 439-amino-acid chain: Tol-Pal system protein TolB (439 aa).

The first 21 residues, 1–21 (MRFRLALSLLSLALFAAPAAA), serve as a signal peptide directing secretion.

Belongs to the TolB family. As to quaternary structure, the Tol-Pal system is composed of five core proteins: the inner membrane proteins TolA, TolQ and TolR, the periplasmic protein TolB and the outer membrane protein Pal. They form a network linking the inner and outer membranes and the peptidoglycan layer.

Its subcellular location is the periplasm. Part of the Tol-Pal system, which plays a role in outer membrane invagination during cell division and is important for maintaining outer membrane integrity. In Rhizorhabdus wittichii (strain DSM 6014 / CCUG 31198 / JCM 15750 / NBRC 105917 / EY 4224 / RW1) (Sphingomonas wittichii), this protein is Tol-Pal system protein TolB.